A 203-amino-acid chain; its full sequence is Putative 3-methyladenine DNA glycosylase (203 aa).

It belongs to the DNA glycosylase MPG family.

The sequence is that of Putative 3-methyladenine DNA glycosylase from Clostridium botulinum (strain ATCC 19397 / Type A).